A 454-amino-acid chain; its full sequence is Chromosomal replication initiator protein DnaA (454 aa).

The segment at 1 to 79 is domain I, interacts with DnaA modulators; it reads MSLCLWKQCL…NSPFIKFKVY (79 aa). The domain II stretch occupies residues 79-117; sequence YQTSKEKKFKKNILQKIQNLNAKPIWDKIPIFKKSSHRS. Positions 118–334 are domain III, AAA+ region; the sequence is NINKKHSFEN…GALNRVIVNA (217 aa). Gly-162, Gly-164, Lys-165, and Thr-166 together coordinate ATP. The segment at 335-454 is domain IV, binds dsDNA; that stretch reads NFTHRSITVE…FSNLIRTLSV (120 aa).

This sequence belongs to the DnaA family. Oligomerizes as a right-handed, spiral filament on DNA at oriC.

The protein localises to the cytoplasm. Plays an essential role in the initiation and regulation of chromosomal replication. ATP-DnaA binds to the origin of replication (oriC) to initiate formation of the DNA replication initiation complex once per cell cycle. Binds the DnaA box (a 9 base pair repeat at the origin) and separates the double-stranded (ds)DNA. Forms a right-handed helical filament on oriC DNA; dsDNA binds to the exterior of the filament while single-stranded (ss)DNA is stabiized in the filament's interior. The ATP-DnaA-oriC complex binds and stabilizes one strand of the AT-rich DNA unwinding element (DUE), permitting loading of DNA polymerase. After initiation quickly degrades to an ADP-DnaA complex that is not apt for DNA replication. Binds acidic phospholipids. The sequence is that of Chromosomal replication initiator protein DnaA from Buchnera aphidicola subsp. Schizaphis graminum (strain Sg).